Here is a 345-residue protein sequence, read N- to C-terminus: S-adenosylmethionine:tRNA ribosyltransferase-isomerase (345 aa).

It belongs to the QueA family. In terms of assembly, monomer.

It is found in the cytoplasm. It carries out the reaction 7-aminomethyl-7-carbaguanosine(34) in tRNA + S-adenosyl-L-methionine = epoxyqueuosine(34) in tRNA + adenine + L-methionine + 2 H(+). Its pathway is tRNA modification; tRNA-queuosine biosynthesis. Functionally, transfers and isomerizes the ribose moiety from AdoMet to the 7-aminomethyl group of 7-deazaguanine (preQ1-tRNA) to give epoxyqueuosine (oQ-tRNA). The sequence is that of S-adenosylmethionine:tRNA ribosyltransferase-isomerase from Lactococcus lactis subsp. lactis (strain IL1403) (Streptococcus lactis).